The primary structure comprises 423 residues: ATP-dependent RNA helicase RhlB (423 aa).

The Q motif motif lies at 9–37; the sequence is LRFSDLPLHHQVLAALQEKGFDYCTPIQA. The Helicase ATP-binding domain occupies 40-217; the sequence is LPMSLAGKDV…FEDMNDPEYV (178 aa). 53 to 60 contributes to the ATP binding site; it reads AQTGTGKT. The DEAD box motif lies at 163 to 166; sequence DEAD. Residues 241–388 enclose the Helicase C-terminal domain; it reads KMALLLTLLE…VSQYDVAALL (148 aa). The interval 397-423 is disordered; the sequence is KRGNNNSKNSANSNRTFQKKRSLKRNF. The span at 400–410 shows a compositional bias: low complexity; sequence NNNSKNSANSN. Basic residues predominate over residues 413-423; it reads FQKKRSLKRNF.

Belongs to the DEAD box helicase family. RhlB subfamily. In terms of assembly, component of the RNA degradosome, which is a multiprotein complex involved in RNA processing and mRNA degradation.

It is found in the cytoplasm. The catalysed reaction is ATP + H2O = ADP + phosphate + H(+). Functionally, DEAD-box RNA helicase involved in RNA degradation. Has RNA-dependent ATPase activity and unwinds double-stranded RNA. This chain is ATP-dependent RNA helicase RhlB, found in Pasteurella multocida (strain Pm70).